Here is a 311-residue protein sequence, read N- to C-terminus: Acetyl-coenzyme A carboxylase carboxyl transferase subunit alpha (311 aa).

In terms of domain architecture, CoA carboxyltransferase C-terminal spans 36-286; it reads ELKKEVERVY…VNYFLKSLEE (251 aa).

This sequence belongs to the AccA family. In terms of assembly, acetyl-CoA carboxylase is a heterohexamer composed of biotin carboxyl carrier protein (AccB), biotin carboxylase (AccC) and two subunits each of ACCase subunit alpha (AccA) and ACCase subunit beta (AccD).

Its subcellular location is the cytoplasm. It carries out the reaction N(6)-carboxybiotinyl-L-lysyl-[protein] + acetyl-CoA = N(6)-biotinyl-L-lysyl-[protein] + malonyl-CoA. Its pathway is lipid metabolism; malonyl-CoA biosynthesis; malonyl-CoA from acetyl-CoA: step 1/1. Its function is as follows. Component of the acetyl coenzyme A carboxylase (ACC) complex. First, biotin carboxylase catalyzes the carboxylation of biotin on its carrier protein (BCCP) and then the CO(2) group is transferred by the carboxyltransferase to acetyl-CoA to form malonyl-CoA. The chain is Acetyl-coenzyme A carboxylase carboxyl transferase subunit alpha from Wolinella succinogenes (strain ATCC 29543 / DSM 1740 / CCUG 13145 / JCM 31913 / LMG 7466 / NCTC 11488 / FDC 602W) (Vibrio succinogenes).